We begin with the raw amino-acid sequence, 116 residues long: uncharacterized protein (116 aa).

Residues 5 to 23 (LLAVETWYMLILSFRFLFF) traverse the membrane as a helical segment.

It is found in the membrane. This is an uncharacterized protein from Saccharomyces cerevisiae (strain ATCC 204508 / S288c) (Baker's yeast).